The following is a 448-amino-acid chain: Ribosomal protein uS12 methylthiotransferase RimO (448 aa).

Residues 16–126 (PKISFVSLGC…VVAAVHEAVP (111 aa)) form the MTTase N-terminal domain. [4Fe-4S] cluster-binding residues include Cys25, Cys61, Cys90, Cys157, Cys161, and Cys164. Residues 143–380 (LTPRHYAYLK…METQNGIALR (238 aa)) enclose the Radical SAM core domain. The TRAM domain maps to 383–448 (RAKVGKRLPV…EAYDLYGSVA (66 aa)).

The protein belongs to the methylthiotransferase family. RimO subfamily. [4Fe-4S] cluster serves as cofactor.

Its subcellular location is the cytoplasm. The catalysed reaction is L-aspartate(89)-[ribosomal protein uS12]-hydrogen + (sulfur carrier)-SH + AH2 + 2 S-adenosyl-L-methionine = 3-methylsulfanyl-L-aspartate(89)-[ribosomal protein uS12]-hydrogen + (sulfur carrier)-H + 5'-deoxyadenosine + L-methionine + A + S-adenosyl-L-homocysteine + 2 H(+). Its function is as follows. Catalyzes the methylthiolation of an aspartic acid residue of ribosomal protein uS12. The chain is Ribosomal protein uS12 methylthiotransferase RimO from Methylobacterium radiotolerans (strain ATCC 27329 / DSM 1819 / JCM 2831 / NBRC 15690 / NCIMB 10815 / 0-1).